Consider the following 726-residue polypeptide: DNA ligase (726 aa).

NAD(+) contacts are provided by residues 34-38 (DAEYD), 83-84 (SL), and Glu115. The active-site N6-AMP-lysine intermediate is the Lys117. Residues Arg138, Glu190, Lys306, and Lys330 each contribute to the NAD(+) site. Zn(2+) is bound by residues Cys424, Cys427, Cys442, and Cys448. The BRCT domain maps to 608-698 (SRGNALAGKT…RTADDQATPA (91 aa)). Residues 690–726 (TADDQATPASDRRAATASVPPSDDAPGSPRQLDFDLT) are disordered.

Belongs to the NAD-dependent DNA ligase family. LigA subfamily. Requires Mg(2+) as cofactor. Mn(2+) is required as a cofactor.

The enzyme catalyses NAD(+) + (deoxyribonucleotide)n-3'-hydroxyl + 5'-phospho-(deoxyribonucleotide)m = (deoxyribonucleotide)n+m + AMP + beta-nicotinamide D-nucleotide.. Its function is as follows. DNA ligase that catalyzes the formation of phosphodiester linkages between 5'-phosphoryl and 3'-hydroxyl groups in double-stranded DNA using NAD as a coenzyme and as the energy source for the reaction. It is essential for DNA replication and repair of damaged DNA. The chain is DNA ligase from Roseiflexus sp. (strain RS-1).